Consider the following 476-residue polypeptide: Aspartyl/glutamyl-tRNA(Asn/Gln) amidotransferase subunit B (476 aa).

This sequence belongs to the GatB/GatE family. GatB subfamily. As to quaternary structure, heterotrimer of A, B and C subunits.

It catalyses the reaction L-glutamyl-tRNA(Gln) + L-glutamine + ATP + H2O = L-glutaminyl-tRNA(Gln) + L-glutamate + ADP + phosphate + H(+). The catalysed reaction is L-aspartyl-tRNA(Asn) + L-glutamine + ATP + H2O = L-asparaginyl-tRNA(Asn) + L-glutamate + ADP + phosphate + 2 H(+). Its function is as follows. Allows the formation of correctly charged Asn-tRNA(Asn) or Gln-tRNA(Gln) through the transamidation of misacylated Asp-tRNA(Asn) or Glu-tRNA(Gln) in organisms which lack either or both of asparaginyl-tRNA or glutaminyl-tRNA synthetases. The reaction takes place in the presence of glutamine and ATP through an activated phospho-Asp-tRNA(Asn) or phospho-Glu-tRNA(Gln). The sequence is that of Aspartyl/glutamyl-tRNA(Asn/Gln) amidotransferase subunit B from Latilactobacillus sakei subsp. sakei (strain 23K) (Lactobacillus sakei subsp. sakei).